The sequence spans 897 residues: Alpha-actinin-2 (897 aa).

The actin-binding stretch occupies residues 1 to 257 (MNSMNQIETN…IMTYVSCFYH (257 aa)). Calponin-homology (CH) domains are found at residues 41–145 (KQQR…LRFA) and 154–260 (TSAK…HAFA). 4 Spectrin repeats span residues 284–394 (RLME…WLLN), 404–509 (HLAE…ALER), 519–630 (QLHL…SLQE), and 640–743 (RLRR…EVET). 2 EF-hand domains span residues 756–791 (EQMN…MGYD) and 792–827 (LGEA…ETAD). Residues Asp-769, Asn-773, Asp-780, Asp-805, Asn-807, and Thr-811 each contribute to the Ca(2+) site.

It belongs to the alpha-actinin family. As to quaternary structure, homodimer; antiparallel. Ubiquitinated by FBXL22, leading to proteasomal degradation.

The protein resides in the cytoplasm. The protein localises to the myofibril. Its subcellular location is the sarcomere. It is found in the z line. F-actin cross-linking protein which is thought to anchor actin to a variety of intracellular structures. This is a bundling protein. This Gallus gallus (Chicken) protein is Alpha-actinin-2 (ACTN2).